The chain runs to 535 residues: CTP synthase (535 aa).

Positions 1-267 (MTKYIFVTGG…DQIVCDHLKL (267 aa)) are amidoligase domain. S13 is a CTP binding site. A UTP-binding site is contributed by S13. Residue 14–19 (SLGKGI) participates in ATP binding. Residue Y54 coordinates L-glutamine. D71 contributes to the ATP binding site. Mg(2+)-binding residues include D71 and E141. CTP-binding positions include 148-150 (DIE), 188-193 (KTKPTQ), and K224. UTP is bound by residues 188 to 193 (KTKPTQ) and K224. 240-242 (RDA) serves as a coordination point for ATP. A Glutamine amidotransferase type-1 domain is found at 292 to 534 (KIALVGKYVE…VRASITNKES (243 aa)). Residue G354 coordinates L-glutamine. C381 acts as the Nucleophile; for glutamine hydrolysis in catalysis. Residues 382-385 (LGMQ), E405, and R462 each bind L-glutamine. Active-site residues include H507 and E509.

It belongs to the CTP synthase family. In terms of assembly, homotetramer.

It carries out the reaction UTP + L-glutamine + ATP + H2O = CTP + L-glutamate + ADP + phosphate + 2 H(+). The enzyme catalyses L-glutamine + H2O = L-glutamate + NH4(+). It catalyses the reaction UTP + NH4(+) + ATP = CTP + ADP + phosphate + 2 H(+). Its pathway is pyrimidine metabolism; CTP biosynthesis via de novo pathway; CTP from UDP: step 2/2. Allosterically activated by GTP, when glutamine is the substrate; GTP has no effect on the reaction when ammonia is the substrate. The allosteric effector GTP functions by stabilizing the protein conformation that binds the tetrahedral intermediate(s) formed during glutamine hydrolysis. Inhibited by the product CTP, via allosteric rather than competitive inhibition. Its function is as follows. Catalyzes the ATP-dependent amination of UTP to CTP with either L-glutamine or ammonia as the source of nitrogen. Regulates intracellular CTP levels through interactions with the four ribonucleotide triphosphates. The protein is CTP synthase of Bacillus cereus (strain G9842).